Consider the following 95-residue polypeptide: Large ribosomal subunit protein bL25 (95 aa).

Belongs to the bacterial ribosomal protein bL25 family. Part of the 50S ribosomal subunit; part of the 5S rRNA/L5/L18/L25 subcomplex. Contacts the 5S rRNA. Binds to the 5S rRNA independently of L5 and L18.

Functionally, this is one of the proteins that binds to the 5S RNA in the ribosome where it forms part of the central protuberance. This is Large ribosomal subunit protein bL25 from Shewanella baltica (strain OS223).